Reading from the N-terminus, the 195-residue chain is Proteasome subunit beta 1 (195 aa).

The propeptide at 1-6 (MEELPA) is removed in mature form; by autocatalysis. Thr-7 (nucleophile) is an active-site residue.

It belongs to the peptidase T1B family. In terms of assembly, the 20S proteasome core is composed of 14 alpha and 14 beta subunits that assemble into four stacked heptameric rings, resulting in a barrel-shaped structure. The two inner rings, each composed of seven catalytic beta subunits, are sandwiched by two outer rings, each composed of seven alpha subunits. The catalytic chamber with the active sites is on the inside of the barrel. Has a gated structure, the ends of the cylinder being occluded by the N-termini of the alpha-subunits. Is capped at one or both ends by the proteasome regulatory ATPase, PAN.

The protein resides in the cytoplasm. The catalysed reaction is Cleavage of peptide bonds with very broad specificity.. Its activity is regulated as follows. The formation of the proteasomal ATPase PAN-20S proteasome complex, via the docking of the C-termini of PAN into the intersubunit pockets in the alpha-rings, triggers opening of the gate for substrate entry. Interconversion between the open-gate and close-gate conformations leads to a dynamic regulation of the 20S proteasome proteolysis activity. Its function is as follows. Component of the proteasome core, a large protease complex with broad specificity involved in protein degradation. This chain is Proteasome subunit beta 1, found in Sulfolobus acidocaldarius (strain ATCC 33909 / DSM 639 / JCM 8929 / NBRC 15157 / NCIMB 11770).